A 156-amino-acid chain; its full sequence is RNA polymerase sigma factor SigS (156 aa).

The Polymerase core binding motif lies at 29–44 (EYYQLLLIKMWQLSQI). Positions 126–145 (QFEIAEIMSLSLSTIKLIKM) form a DNA-binding region, H-T-H motif.

The protein belongs to the sigma-70 factor family.

In terms of biological role, sigma factors are initiation factors that promote the attachment of RNA polymerase to specific initiation sites and are then released. Sigma-S contributes to the protection against external stress, thus playing a role in cellular fitness and survival. The polypeptide is RNA polymerase sigma factor SigS (sigS) (Staphylococcus aureus (strain COL)).